The following is a 273-amino-acid chain: Small ribosomal subunit protein uS3 (273 aa).

A KH type-2 domain is found at 43–111 (IRQLMSTGME…QVQLNILEVK (69 aa)). Residues 218-227 (QQAAAAPSRG) show a composition bias toward low complexity. The interval 218–273 (QQAAAAPSRGRAGDRPGRPGGDRRRRNDRPAAEAAPAAVEAPAAEAAAPAAEGGQA) is disordered. Residues 228–239 (RAGDRPGRPGGD) show a composition bias toward basic and acidic residues. Positions 249–273 (AEAAPAAVEAPAAEAAAPAAEGGQA) are enriched in low complexity.

This sequence belongs to the universal ribosomal protein uS3 family. Part of the 30S ribosomal subunit. Forms a tight complex with proteins S10 and S14.

Binds the lower part of the 30S subunit head. Binds mRNA in the 70S ribosome, positioning it for translation. The protein is Small ribosomal subunit protein uS3 of Paenarthrobacter aurescens (strain TC1).